The sequence spans 136 residues: Small ribosomal subunit protein uS9 (136 aa).

The protein belongs to the universal ribosomal protein uS9 family.

The polypeptide is Small ribosomal subunit protein uS9 (Borrelia recurrentis (strain A1)).